Consider the following 399-residue polypeptide: Glutathione S-transferase LANCL1 (399 aa).

Ala2 carries the post-translational modification N-acetylalanine. N6-acetyllysine is present on Lys142. Cys276 is a binding site for Zn(2+). Lys317 provides a ligand contact to glutathione. The Zn(2+) site is built by Cys322 and His323. Glutathione is bound at residue 364 to 367 (RTPD).

This sequence belongs to the LanC-like protein family. In terms of assembly, interacts with the C-terminal of STOM. Interacts with the EPS8 SH3 domain. Interaction with EPS8 is inhibited by glutathione binding. As to expression, expressed in brain.

The protein localises to the cytoplasm. It localises to the cell membrane. It carries out the reaction RX + glutathione = an S-substituted glutathione + a halide anion + H(+). It catalyses the reaction 1-chloro-2,4-dinitrobenzene + glutathione = 2,4-dinitrophenyl-S-glutathione + chloride + H(+). In terms of biological role, functions as a glutathione transferase. Catalyzes conjugation of the glutathione (GSH) to artificial substrates 1-chloro-2,4-dinitrobenzene (CDNB) and p-nitrophenyl acetate. Mitigates neuronal oxidative stress during normal postnatal development and in response to oxidative stresses probably through GSH antioxidant defense mechanism. May play a role in EPS8 signaling. Binds glutathione. The sequence is that of Glutathione S-transferase LANCL1 (LANCL1) from Bos taurus (Bovine).